The chain runs to 889 residues: Valine--tRNA ligase (889 aa).

The 'HIGH' region motif lies at 50 to 60 (PNVTGKLHLGH). The short motif at 532–536 (KMSKS) is the 'KMSKS' region element. Position 535 (K535) interacts with ATP. A coiled-coil region spans residues 816-889 (LAELVDLDEE…QRLVDIKAEA (74 aa)).

Belongs to the class-I aminoacyl-tRNA synthetase family. ValS type 1 subfamily. As to quaternary structure, monomer.

It is found in the cytoplasm. The enzyme catalyses tRNA(Val) + L-valine + ATP = L-valyl-tRNA(Val) + AMP + diphosphate. Functionally, catalyzes the attachment of valine to tRNA(Val). As ValRS can inadvertently accommodate and process structurally similar amino acids such as threonine, to avoid such errors, it has a 'posttransfer' editing activity that hydrolyzes mischarged Thr-tRNA(Val) in a tRNA-dependent manner. The chain is Valine--tRNA ligase from Lactiplantibacillus plantarum (strain ATCC BAA-793 / NCIMB 8826 / WCFS1) (Lactobacillus plantarum).